A 156-amino-acid polypeptide reads, in one-letter code: S-ribosylhomocysteine lyase (156 aa).

Residues H56, H60, and C123 each coordinate Fe cation.

The protein belongs to the LuxS family. As to quaternary structure, homodimer. Fe cation is required as a cofactor.

It catalyses the reaction S-(5-deoxy-D-ribos-5-yl)-L-homocysteine = (S)-4,5-dihydroxypentane-2,3-dione + L-homocysteine. Its function is as follows. Involved in the synthesis of autoinducer 2 (AI-2) which is secreted by bacteria and is used to communicate both the cell density and the metabolic potential of the environment. The regulation of gene expression in response to changes in cell density is called quorum sensing. Catalyzes the transformation of S-ribosylhomocysteine (RHC) to homocysteine (HC) and 4,5-dihydroxy-2,3-pentadione (DPD). This Staphylococcus aureus (strain Mu3 / ATCC 700698) protein is S-ribosylhomocysteine lyase.